We begin with the raw amino-acid sequence, 98 residues long: Leydig cell tumor 10 kDa protein homolog (98 aa).

Disordered regions lie at residues 1-38 (MAQG…RVIA) and 73-98 (SLPK…KMPA). A compositionally biased stretch (low complexity) spans 16 to 25 (SKAAAAAASA). Residues 28–38 (RGPRKGGRVIA) are compositionally biased toward basic residues. The span at 73 to 83 (SLPKKLALLKA) shows a compositional bias: low complexity.

The protein belongs to the UPF0390 family.

In terms of biological role, may have a potential role in hypercalcemia of malignancy. The polypeptide is Leydig cell tumor 10 kDa protein homolog (Bos taurus (Bovine)).